The sequence spans 572 residues: Zyxin (572 aa).

Alanine 2 is modified (N-acetylalanine). The interval 23-351 (QKKFGPVVAP…VRSPGAPGPL (329 aa)) is disordered. Composition is skewed to pro residues over residues 63 to 78 (IPPP…PPPL) and 93 to 108 (FPPP…PPAP). A phosphoserine mark is found at serine 116, serine 142, serine 143, serine 169, and serine 170. Positions 143–156 (SIDLEIDSLSSLLD) are enriched in low complexity. The residue at position 179 (threonine 179) is a Phosphothreonine. Over residues 202–239 (SPSSSQPLPQVPAPAQSQTQFHVQPQPQPKPQVQLHVQ) the composition is skewed to low complexity. Polar residues predominate over residues 240 to 252 (SQTQPVSLANTQP). Residue arginine 253 is modified to Asymmetric dimethylarginine. Residues 253–265 (RGPPASSPAPAPK) show a composition bias toward pro residues. Serine 259 carries the post-translational modification Phosphoserine. Lysine 265 carries the N6-acetyllysine modification. Residue serine 267 is modified to Phosphoserine. Threonine 270 carries the phosphothreonine modification. Position 272 is an N6-acetyllysine (lysine 272). A Phosphothreonine modification is found at threonine 274. Lysine 279 carries the post-translational modification N6-acetyllysine. Phosphoserine occurs at positions 281, 288, and 308. Polar residues predominate over residues 305–318 (GTGSPQPPSFTYAQ). The span at 319–330 (QREKPRVQEKQH) shows a compositional bias: basic and acidic residues. Position 344 is a phosphoserine (serine 344). LIM zinc-binding domains are found at residues 384 to 443 (CGRC…TLEK), 444 to 503 (CNTC…YAPR), and 504 to 570 (CSVC…TARA).

The protein belongs to the zyxin/ajuba family. Interacts with HPV type 6 protein E6. Does not interact significantly with E6 proteins from HPV types 11, 16, or 18. Interacts, via the Pro-rich regions, with the EVH1 domains of ENAH, EVL and VASP. Interacts with the first LIM domain of TES. Interacts with NEBL (isoform 2). Interacts with SYNPO2. In terms of assembly, (Microbial infection) Interacts with human papillomavirus type 6/HPV6 protein E6. Does not interact significantly with E6 proteins from HPV types 11, 16, or 18.

The protein localises to the cytoplasm. Its subcellular location is the cytoskeleton. It is found in the nucleus. It localises to the cell junction. The protein resides in the focal adhesion. In terms of biological role, adhesion plaque protein. Binds alpha-actinin and the CRP protein. Important for targeting TES and ENA/VASP family members to focal adhesions and for the formation of actin-rich structures. May be a component of a signal transduction pathway that mediates adhesion-stimulated changes in gene expression. The protein is Zyxin (ZYX) of Homo sapiens (Human).